The following is a 204-amino-acid chain: Kunitz-type trypsin inhibitor KTI2 (204 aa).

The signal sequence occupies residues 1–25 (MKSTIFFALFLVCAFTISYLPSATA). Cystine bridges form between Cys65/Cys112 and Cys160/Cys169.

Belongs to the protease inhibitor I3 (leguminous Kunitz-type inhibitor) family. Seed, and at low levels in leaf, root, and stem.

Its function is as follows. Has probably no trypsin inhibitor activity. KTi2 is responsible for most of the Kunitz trypsin inhibitor activity and protein found in soybean seeds. The chain is Kunitz-type trypsin inhibitor KTI2 (KTI2) from Glycine max (Soybean).